Reading from the N-terminus, the 364-residue chain is MLIFPLINDTSRKIIHIDMDAFFAAVEERDNPALKGKPVVIGKDPRETGGRGVVSTCNYEARKYGIHSAMSSKEAYERCPKAIFISGNYEKYRTVGDQIRRIFKRYTDVVEPMSIDEAYLDVTNNKLGIKSAVKIAKLIQHDIWKEVGLTCSAGVSYNKFLAKLASDFEKPHGLTLVLKEDALCFLAKLPIEKFHGVGKKSVEKLHDMGIYTGQDLLAVPEMTLIDHFGRFGFDLYRKARGISNSPVKSDRIRKSIGSERTYAKLLYQETDIKAEISKNAKRVAALLQDHKKLGKTIVLKVRYADFTTLTKRVTLPELTRNAAQIEQVAGDIFDSLSENPAGIRLLGVTMTNLEDKVADISLDL.

The UmuC domain occupies 14–198; sequence IIHIDMDAFF…LPIEKFHGVG (185 aa). Mg(2+) is bound by residues Asp18 and Asp116. Glu117 is an active-site residue.

This sequence belongs to the DNA polymerase type-Y family. In terms of assembly, monomer. It depends on Mg(2+) as a cofactor.

Its subcellular location is the cytoplasm. It carries out the reaction DNA(n) + a 2'-deoxyribonucleoside 5'-triphosphate = DNA(n+1) + diphosphate. Its function is as follows. Poorly processive, error-prone DNA polymerase involved in untargeted mutagenesis. Copies undamaged DNA at stalled replication forks, which arise in vivo from mismatched or misaligned primer ends. These misaligned primers can be extended by PolIV. Exhibits no 3'-5' exonuclease (proofreading) activity. May be involved in translesional synthesis, in conjunction with the beta clamp from PolIII. The chain is DNA polymerase IV from Streptococcus pyogenes serotype M6 (strain ATCC BAA-946 / MGAS10394).